Reading from the N-terminus, the 1315-residue chain is Myopalladin (1315 aa).

Disordered stretches follow at residues 19 to 60 (SYLA…DLPD), 81 to 145 (INHD…TQSK), 166 to 204 (HSSK…TERR), and 230 to 266 (EAKR…LGQP). Basic and acidic residues-rich tracts occupy residues 23–35 (ETRH…RSRA) and 84–104 (DPLE…DQTK). Phosphoserine occurs at positions 99 and 129. The span at 166 to 180 (HSSKRIRPRACKNHK) shows a compositional bias: basic residues. Positions 184–199 (ESQNKVLQENSPTFSD) are enriched in polar residues. The stretch at 219–240 (DNELNHAIEQREAKRREAELAA) forms a coiled coil. Thr-249 carries the post-translational modification Phosphothreonine. The region spanning 267-357 (PRFTQKLRSR…DSTSAEIYIE (91 aa)) is the Ig-like 1 domain. A disulfide bridge connects residues Cys-288 and Cys-339. The disordered stretch occupies residues 359 to 392 (VSSSDSEGDPNKEEMNRIQKPNEVSSPPTTSAAI). Positions 432 to 528 (PVFTKMLQNL…GTVSSIAQLD (97 aa)) constitute an Ig-like 2 domain. Cys-453 and Cys-512 are oxidised to a cystine. Disordered regions lie at residues 535 to 652 (ISDN…VLAK), 674 to 704 (LQNT…SSKQ), and 725 to 747 (SSTS…NTPQ). Positions 609–623 (SSGSGAANTSQTRPN) are enriched in polar residues. Ser-641 is modified (phosphoserine). Low complexity predominate over residues 725–741 (SSTSTATVSPSSSPVFT). A Phosphoserine modification is found at Ser-754. Disordered stretches follow at residues 762-814 (HPST…TPVS) and 840-865 (NAMG…KAPQ). Residues 779-790 (PAPPSPAEPAAP) show a composition bias toward pro residues. 2 positions are modified to phosphoserine: Ser-809 and Ser-814. Residues Ser-903 and Ser-924 each carry the phosphoserine modification. Ig-like domains are found at residues 941–1025 (PIFD…GRIS), 1068–1157 (PHFL…LELT), and 1167–1257 (PVIL…ARLD). Cys-1089 and Cys-1141 are disulfide-bonded.

The protein belongs to the myotilin/palladin family. Interacts with TTN/titin, NEB, NEBL, ACTN2 and CARP.

It localises to the cytoplasm. The protein localises to the nucleus. It is found in the myofibril. Its subcellular location is the sarcomere. The protein resides in the z line. Component of the sarcomere that tethers together nebulin (skeletal muscle) and nebulette (cardiac muscle) to alpha-actinin, at the Z lines. This Mus musculus (Mouse) protein is Myopalladin (Mypn).